A 120-amino-acid polypeptide reads, in one-letter code: Large-conductance mechanosensitive channel (120 aa).

The next 2 helical transmembrane spans lie at 7–27 and 64–84; these read EFALKGNVLDLAIAVVMGAAF and GLFIQSVIDFIIIAFALFIFV.

This sequence belongs to the MscL family. Homopentamer.

It is found in the cell membrane. Its function is as follows. Channel that opens in response to stretch forces in the membrane lipid bilayer. May participate in the regulation of osmotic pressure changes within the cell. The protein is Large-conductance mechanosensitive channel of Staphylococcus aureus (strain Mu3 / ATCC 700698).